The sequence spans 319 residues: Large ribosomal subunit protein uL29m (319 aa).

The tract at residues 1–55 is disordered; it reads MWKRSFHSQGGPLRARTKFTKPKPKQPVLPKDKIRPPTQLTHHSNNLRITEPIPP. The segment covering 15 to 24 has biased composition (basic residues); it reads ARTKFTKPKP. A compositionally biased stretch (polar residues) spans 38–48; it reads TQLTHHSNNLR.

The protein belongs to the universal ribosomal protein uL29 family. Component of the mitochondrial large ribosomal subunit. Mature mitochondrial ribosomes consist of a small (37S) and a large (54S) subunit. The 37S subunit contains at least 33 different proteins and 1 molecule of RNA (15S). The 54S subunit contains at least 45 different proteins and 1 molecule of RNA (21S).

It is found in the mitochondrion. This Saccharomyces cerevisiae (strain YJM789) (Baker's yeast) protein is Large ribosomal subunit protein uL29m (MRPL4).